The chain runs to 211 residues: 5,6-dimethylbenzimidazole synthase (211 aa).

FMN is bound by residues arginine 22–arginine 26, serine 50, leucine 99, and serine 158.

It belongs to the BluB family. In terms of assembly, homooctamer.

It carries out the reaction FMNH2 + O2 = dialurate + 5,6-dimethylbenzimidazole + D-erythrose 4-phosphate + H(+). Involved in the biosynthesis of cobalamin (vitamin B12). Catalyzes the oxidative fragmentation and contraction of the isoalloxazine heterocycle and the cleavage of the ribityl tail of FMNH(2) to form 5,6-dimethylbenzimidazole (DMB) and D-erythrose 4-phosphate (E4P). NAD(P)H is only required initially to reduce FMN and oxygen drives the oxidative fragmentation. The protein is 5,6-dimethylbenzimidazole synthase of Rhodospirillum rubrum (strain ATCC 11170 / ATH 1.1.1 / DSM 467 / LMG 4362 / NCIMB 8255 / S1).